The following is a 290-amino-acid chain: MVIQKEKKSCGQVVEEWKEFVWNPRTHQFMGRTGTSWAFILLFYLVFYGFLTAMFTLTMWVMLQTVSEHTPKYQDRLATPGLMIRPKTENLDVIVNVSDTESWDQHVQKLNKFLEPYNDSIQAQKNDVCRPGRYYEQPDNGVLNYPKRACQFNRTQLGNCSGIGDPTHYGYSTGQPCVFIKMNRVINFYAGANQSMNVTCAGKRDEDAENLGNFVMFPANGNIDLMYFPYYGKKFHVNYTQPLVAVKFLNVTPNVEVNVECRINAANIATDDERDKFAGRVAFKLRINKT.

Topologically, residues 1-39 (MVIQKEKKSCGQVVEEWKEFVWNPRTHQFMGRTGTSWAF) are cytoplasmic. The helical; Signal-anchor for type II membrane protein transmembrane segment at 40–67 (ILLFYLVFYGFLTAMFTLTMWVMLQTVS) threads the bilayer. Residues 68–290 (EHTPKYQDRL…VAFKLRINKT (223 aa)) are Extracellular-facing. Asn-96 and Asn-118 each carry an N-linked (GlcNAc...) asparagine glycan. Cys-129 and Cys-150 are disulfide-bonded. N-linked (GlcNAc...) asparagine glycans are attached at residues Asn-153 and Asn-159. Cysteines 160 and 177 form a disulfide. N-linked (GlcNAc...) asparagine glycosylation is found at Asn-193, Asn-197, and Asn-238. The segment at 193 to 290 (NQSMNVTCAG…VAFKLRINKT (98 aa)) is immunoglobulin-like. Residues Cys-200 and Cys-261 are joined by a disulfide bond.

This sequence belongs to the X(+)/potassium ATPases subunit beta family. As to quaternary structure, the sodium/potassium-transporting ATPase is composed of a catalytic alpha subunit, an auxiliary non-catalytic beta subunit and an additional regulatory subunit. Interacts with BSG.

It is found in the cell membrane. In terms of biological role, this is the non-catalytic component of the active enzyme, which catalyzes the hydrolysis of ATP coupled with the exchange of Na(+) and K(+) ions across the plasma membrane. The exact function of the beta-2 subunit is not known. Mediates cell adhesion of neurons and astrocytes, and promotes neurite outgrowth. The protein is Sodium/potassium-transporting ATPase subunit beta-2 (ATP1B2) of Oryctolagus cuniculus (Rabbit).